Here is a 496-residue protein sequence, read N- to C-terminus: Lysine--tRNA ligase (496 aa).

2 residues coordinate Mg(2+): Glu408 and Glu415.

It belongs to the class-II aminoacyl-tRNA synthetase family. In terms of assembly, homodimer. The cofactor is Mg(2+).

The protein localises to the cytoplasm. It catalyses the reaction tRNA(Lys) + L-lysine + ATP = L-lysyl-tRNA(Lys) + AMP + diphosphate. This chain is Lysine--tRNA ligase, found in Legionella pneumophila (strain Corby).